The sequence spans 548 residues: Chaperonin GroEL (548 aa).

Residues 30–33 (TLGP), K51, 87–91 (DGTTT), G415, 479–481 (NAA), and D495 contribute to the ATP site.

It belongs to the chaperonin (HSP60) family. Forms a cylinder of 14 subunits composed of two heptameric rings stacked back-to-back. Interacts with the co-chaperonin GroES.

The protein localises to the cytoplasm. The catalysed reaction is ATP + H2O + a folded polypeptide = ADP + phosphate + an unfolded polypeptide.. Together with its co-chaperonin GroES, plays an essential role in assisting protein folding. The GroEL-GroES system forms a nano-cage that allows encapsulation of the non-native substrate proteins and provides a physical environment optimized to promote and accelerate protein folding. In Serratia proteamaculans (strain 568), this protein is Chaperonin GroEL.